A 408-amino-acid chain; its full sequence is LL-diaminopimelate aminotransferase (408 aa).

Residues tyrosine 15 and glycine 42 each coordinate substrate. Pyridoxal 5'-phosphate contacts are provided by residues tyrosine 72, 108-109 (SK), tyrosine 132, asparagine 187, tyrosine 218, and 246-248 (SFS). Residues lysine 109, tyrosine 132, and asparagine 187 each coordinate substrate. An N6-(pyridoxal phosphate)lysine modification is found at lysine 249. Pyridoxal 5'-phosphate-binding residues include arginine 257 and asparagine 292. Substrate is bound by residues asparagine 292 and arginine 388.

Belongs to the class-I pyridoxal-phosphate-dependent aminotransferase family. LL-diaminopimelate aminotransferase subfamily. As to quaternary structure, homodimer. Requires pyridoxal 5'-phosphate as cofactor.

The enzyme catalyses (2S,6S)-2,6-diaminopimelate + 2-oxoglutarate = (S)-2,3,4,5-tetrahydrodipicolinate + L-glutamate + H2O + H(+). The protein operates within amino-acid biosynthesis; L-lysine biosynthesis via DAP pathway; LL-2,6-diaminopimelate from (S)-tetrahydrodipicolinate (aminotransferase route): step 1/1. Functionally, involved in the synthesis of meso-diaminopimelate (m-DAP or DL-DAP), required for both lysine and peptidoglycan biosynthesis. Catalyzes the direct conversion of tetrahydrodipicolinate to LL-diaminopimelate. The sequence is that of LL-diaminopimelate aminotransferase from Prochlorococcus marinus (strain AS9601).